The primary structure comprises 310 residues: RING-H2 finger protein ATL60 (310 aa).

A helical membrane pass occupies residues 24–44 (VLLFSIVSIFTGILFLLLLHL). An RING-type; atypical zinc finger spans residues 120 to 162 (CAVCLSDLVDGDKARVLPRCNHGFHVDCIDMWFQSHSTCPLCR). Disordered regions lie at residues 170–201 (DTTH…QDQS) and 240–260 (GNFA…RSQE). Residues 179–201 (LPQNQNFESGHSTNQHNPSQDQS) show a composition bias toward polar residues.

This sequence belongs to the RING-type zinc finger family. ATL subfamily.

It localises to the membrane. It carries out the reaction S-ubiquitinyl-[E2 ubiquitin-conjugating enzyme]-L-cysteine + [acceptor protein]-L-lysine = [E2 ubiquitin-conjugating enzyme]-L-cysteine + N(6)-ubiquitinyl-[acceptor protein]-L-lysine.. Its pathway is protein modification; protein ubiquitination. The chain is RING-H2 finger protein ATL60 (ATL60) from Arabidopsis thaliana (Mouse-ear cress).